A 188-amino-acid polypeptide reads, in one-letter code: Pyridoxal 5'-phosphate synthase subunit PdxT (188 aa).

47–49 (GES) provides a ligand contact to L-glutamine. Cys-79 serves as the catalytic Nucleophile. L-glutamine contacts are provided by residues Arg-105 and 134–135 (IR). Residues His-170 and Glu-172 each act as charge relay system in the active site.

Belongs to the glutaminase PdxT/SNO family. In terms of assembly, in the presence of PdxS, forms a dodecamer of heterodimers. Only shows activity in the heterodimer.

It carries out the reaction aldehydo-D-ribose 5-phosphate + D-glyceraldehyde 3-phosphate + L-glutamine = pyridoxal 5'-phosphate + L-glutamate + phosphate + 3 H2O + H(+). The enzyme catalyses L-glutamine + H2O = L-glutamate + NH4(+). The protein operates within cofactor biosynthesis; pyridoxal 5'-phosphate biosynthesis. Its function is as follows. Catalyzes the hydrolysis of glutamine to glutamate and ammonia as part of the biosynthesis of pyridoxal 5'-phosphate. The resulting ammonia molecule is channeled to the active site of PdxS. This is Pyridoxal 5'-phosphate synthase subunit PdxT from Listeria monocytogenes serotype 4b (strain CLIP80459).